Reading from the N-terminus, the 444-residue chain is Phosphoglucosamine mutase (444 aa).

Catalysis depends on Ser-102, which acts as the Phosphoserine intermediate. 4 residues coordinate Mg(2+): Ser-102, Asp-241, Asp-243, and Asp-245. A Phosphoserine modification is found at Ser-102.

Belongs to the phosphohexose mutase family. Requires Mg(2+) as cofactor. In terms of processing, activated by phosphorylation.

The catalysed reaction is alpha-D-glucosamine 1-phosphate = D-glucosamine 6-phosphate. Its function is as follows. Catalyzes the conversion of glucosamine-6-phosphate to glucosamine-1-phosphate. In Acidovorax sp. (strain JS42), this protein is Phosphoglucosamine mutase.